A 1376-amino-acid polypeptide reads, in one-letter code: Ubiquitin carboxyl-terminal hydrolase 47 (1376 aa).

Lysine 122 bears the N6-acetyllysine mark. Residues valine 188–lysine 564 enclose the USP domain. Cysteine 197 functions as the Nucleophile in the catalytic mechanism. Positions glutamate 426–asparagine 452 are disordered. Polar residues predominate over residues glutamine 430–asparagine 452. Histidine 503 acts as the Proton acceptor in catalysis. Serine 832 carries the post-translational modification Phosphoserine. Disordered stretches follow at residues serine 835–alanine 863, leucine 880–threonine 971, and glycine 985–lysine 1025. The span at serine 882–serine 900 shows a compositional bias: low complexity. Phosphoserine is present on residues serine 911 and serine 934. The segment covering histidine 930 to phenylalanine 939 has biased composition (polar residues). Residues serine 941–asparagine 951 are compositionally biased toward basic and acidic residues. The span at serine 954–aspartate 970 shows a compositional bias: low complexity. A compositionally biased stretch (basic and acidic residues) spans lysine 998–tryptophan 1007. The segment covering aspartate 1008–aspartate 1021 has biased composition (acidic residues). The residue at position 1014 (serine 1014) is a Phosphoserine. Threonine 1016 carries the post-translational modification Phosphothreonine. Residue serine 1018 is modified to Phosphoserine.

Belongs to the peptidase C19 family. USP47 subfamily. Interacts with BTRC and FBXW11. Interacts with POLB.

The protein localises to the cytoplasm. The enzyme catalyses Thiol-dependent hydrolysis of ester, thioester, amide, peptide and isopeptide bonds formed by the C-terminal Gly of ubiquitin (a 76-residue protein attached to proteins as an intracellular targeting signal).. Ubiquitin-specific protease that specifically deubiquitinates monoubiquitinated DNA polymerase beta (POLB), stabilizing POLB thereby playing a role in base-excision repair (BER). Acts as a regulator of cell growth and genome integrity. May also indirectly regulate CDC25A expression at a transcriptional level. This Mus musculus (Mouse) protein is Ubiquitin carboxyl-terminal hydrolase 47 (Usp47).